The following is a 54-amino-acid chain: Soricidin (54 aa).

3 cysteine pairs are disulfide-bonded: C2–C23, C6–C27, and C9–C41.

It belongs to the opioid neuropeptide precursor family. As to quaternary structure, member of a multiprotein complex. Salivary gland.

It localises to the secreted. Functionally, paralytic toxin that immobilizes a mealworm for 7 days. Inhibits the transient receptor potential cation channel subfamily V member 6 (TRPV6). The polypeptide is Soricidin (Blarina brevicauda (Northern short-tailed shrew)).